The primary structure comprises 599 residues: Dual specificity tyrosine-phosphorylation-regulated kinase 2 (599 aa).

Residues 1-55 (MLTRKPSAAAPAAYPTGRGGDTAVRQLQASPGIGAGAPRSGVGTGPPSPIALPPL) are disordered. Position 30 is a phosphoserine (Ser30). Thr104 carries the phosphothreonine; by ATM modification. Residues 187-189 (KKR) carry the Nuclear localization signal motif. The region spanning 220 to 533 (YEVLKVIGKG…PGQALRHPWL (314 aa)) is the Protein kinase domain. Residues 226-234 (IGKGSFGQV), Lys249, and 299-302 (FELL) contribute to the ATP site. Asp346 serves as the catalytic Proton acceptor. Thr379 is modified (phosphothreonine; by MAP3K10). A Phosphotyrosine; by autocatalysis modification is found at Tyr380. Residue Ser440 is modified to Phosphoserine; by ATM. Ser447 carries the post-translational modification Phosphoserine; by MAP3K10.

Belongs to the protein kinase superfamily. CMGC Ser/Thr protein kinase family. MNB/DYRK subfamily. As to quaternary structure, component of an E3 ligase complex containing DYRK2, EDD/UBR5, DDB1 and DCAF1 (EDVP complex). Interacts directly with EDD/UBR5, DDB1 and DCAF1. Interacts with SIAH2 and MDM2. Interacts with MAP3K10 and NFATC1. May also interact with CCNL2. Mg(2+) is required as a cofactor. Requires Mn(2+) as cofactor. In terms of processing, autophosphorylates cotranslationally on the second tyrosine residue in the Tyr-X-Tyr motif in the activation loop, but once mature, does not have any protein tyrosine kinase activity. Phosphorylated at Thr-104 and Ser-440 by ATM in response to genotoxic stress. Post-translationally, under normal conditions, polyubiquitinated in the nucleus by MDM2, leading to its proteasomal degradation. Phosphorylation on Thr-104 and Ser-440 by ATM in response to genotoxic stress disrupts MDM2 binding and prevents MDM2-mediated ubiquitination and subsequent proteasomal degradation. Polyubiquitinated by SIAH2, leading to its proteasomal degradation. Polyubiquitinated by SIAH2 occurs under normal conditions, and is enhanced in response to hypoxia.

The protein resides in the cytoplasm. The protein localises to the nucleus. The enzyme catalyses L-seryl-[protein] + ATP = O-phospho-L-seryl-[protein] + ADP + H(+). It catalyses the reaction L-threonyl-[protein] + ATP = O-phospho-L-threonyl-[protein] + ADP + H(+). The catalysed reaction is L-tyrosyl-[protein] + ATP = O-phospho-L-tyrosyl-[protein] + ADP + H(+). Its activity is regulated as follows. Activated by autophosphorylation on the second tyrosine residue in the Tyr-X-Tyr motif in the activation loop. Functionally, serine/threonine-protein kinase involved in the regulation of the mitotic cell cycle, cell proliferation, apoptosis, organization of the cytoskeleton and neurite outgrowth. Functions in part via its role in ubiquitin-dependent proteasomal protein degradation. Functions downstream of ATM and phosphorylates p53/TP53 at 'Ser-46', and thereby contributes to the induction of apoptosis in response to DNA damage. Phosphorylates NFATC1, and thereby inhibits its accumulation in the nucleus and its transcription factor activity. Phosphorylates EIF2B5 at 'Ser-544', enabling its subsequent phosphorylation and inhibition by GSK3B. Likewise, phosphorylation of NFATC1, CRMP2/DPYSL2 and CRMP4/DPYSL3 promotes their subsequent phosphorylation by GSK3B. May play a general role in the priming of GSK3 substrates. Inactivates GYS1 by phosphorylation at 'Ser-641', and potentially also a second phosphorylation site, thus regulating glycogen synthesis. Mediates EDVP E3 ligase complex formation and is required for the phosphorylation and subsequent degradation of KATNA1. Phosphorylates TERT at 'Ser-457', promoting TERT ubiquitination by the EDVP complex. Phosphorylates SIAH2, and thereby increases its ubiquitin ligase activity. Promotes the proteasomal degradation of MYC and JUN, and thereby regulates progress through the mitotic cell cycle and cell proliferation. Promotes proteasomal degradation of GLI2 and GLI3, and thereby plays a role in smoothened and sonic hedgehog signaling. Phosphorylates CRMP2/DPYSL2, CRMP4/DPYSL3, DCX, EIF2B5, EIF4EBP1, GLI2, GLI3, GYS1, JUN, MDM2, MYC, NFATC1, p53/TP53, TAU/MAPT and KATNA1. Can phosphorylate histone H1, histone H3 and histone H2B (in vitro). Can phosphorylate CARHSP1 (in vitro). Plays a role in cytoskeleton organization and neurite outgrowth via its phosphorylation of DCX. The protein is Dual specificity tyrosine-phosphorylation-regulated kinase 2 of Mus musculus (Mouse).